The following is a 542-amino-acid chain: Malate synthase, glyoxysomal (542 aa).

The active-site Proton acceptor is R168. D449 (proton donor) is an active-site residue. Residues 540–542 (SKL) carry the Microbody targeting signal motif.

It belongs to the malate synthase family.

The protein resides in the glyoxysome. It catalyses the reaction glyoxylate + acetyl-CoA + H2O = (S)-malate + CoA + H(+). Its pathway is carbohydrate metabolism; glyoxylate cycle; (S)-malate from isocitrate: step 2/2. This is Malate synthase, glyoxysomal (acu-9) from Neurospora crassa (strain ATCC 24698 / 74-OR23-1A / CBS 708.71 / DSM 1257 / FGSC 987).